The primary structure comprises 61 residues: Putative antitoxin APE_0472b.1 (61 aa).

The protein belongs to the UPF0165 family.

Functionally, possibly the antitoxin component of a type II toxin-antitoxin (TA) system. This chain is Putative antitoxin APE_0472b.1, found in Aeropyrum pernix (strain ATCC 700893 / DSM 11879 / JCM 9820 / NBRC 100138 / K1).